A 74-amino-acid polypeptide reads, in one-letter code: Apolipoprotein C-I, acidic form (74 aa).

A signal peptide spans 1 to 26 (MRLFLSLPVLVVVLSMVLEGPTPAQG).

It belongs to the apolipoprotein C1 family.

The protein localises to the secreted. The sequence is that of Apolipoprotein C-I, acidic form (APOC1A) from Colobus guereza (Mantled guereza).